A 427-amino-acid chain; its full sequence is POU domain protein CF1A (427 aa).

Disordered regions lie at residues Tyr-39–Ser-77, His-196–Ser-217, Thr-288–Thr-309, and His-390–His-427. Low complexity predominate over residues Ala-49–Gly-66. The segment covering Gln-67–Ser-77 has biased composition (gly residues). Positions Glu-212–Asp-286 constitute a POU-specific domain. Positions Lys-304 to Thr-363 form a DNA-binding region, homeobox.

The protein belongs to the POU transcription factor family. Class-3 subfamily. In terms of tissue distribution, coexpressed with acj6 in overlapping subsets of neurons in the embryonic epidermis and central nervous system. First detected in the precursor of the tracheal pits and the stomodeal invagination and later in the peripheral nervous system.

The protein localises to the nucleus. Binds to a DNA sequence element required for the expression of the dopa decarboxylase gene (Ddc) in specific dopaminergic neurons. Could also play an early role in specific ectodermal cells, and a subsequent role in the embryonic nervous system. This chain is POU domain protein CF1A (vvl), found in Drosophila melanogaster (Fruit fly).